Consider the following 100-residue polypeptide: Large ribosomal subunit protein uL23 (100 aa).

It belongs to the universal ribosomal protein uL23 family. Part of the 50S ribosomal subunit. Contacts protein L29, and trigger factor when it is bound to the ribosome.

In terms of biological role, one of the early assembly proteins it binds 23S rRNA. One of the proteins that surrounds the polypeptide exit tunnel on the outside of the ribosome. Forms the main docking site for trigger factor binding to the ribosome. The sequence is that of Large ribosomal subunit protein uL23 from Acaryochloris marina (strain MBIC 11017).